Reading from the N-terminus, the 95-residue chain is Co-chaperonin GroES (95 aa).

The protein belongs to the GroES chaperonin family. Heptamer of 7 subunits arranged in a ring. Interacts with the chaperonin GroEL.

It localises to the cytoplasm. Together with the chaperonin GroEL, plays an essential role in assisting protein folding. The GroEL-GroES system forms a nano-cage that allows encapsulation of the non-native substrate proteins and provides a physical environment optimized to promote and accelerate protein folding. GroES binds to the apical surface of the GroEL ring, thereby capping the opening of the GroEL channel. The chain is Co-chaperonin GroES from Lachnoclostridium phytofermentans (strain ATCC 700394 / DSM 18823 / ISDg) (Clostridium phytofermentans).